Reading from the N-terminus, the 239-residue chain is Geranylgeranylglyceryl phosphate synthase (239 aa).

Position 13 (lysine 13) interacts with sn-glycerol 1-phosphate. Aspartate 15 and threonine 42 together coordinate Mg(2+). Residues 162–167 (YIEYSG), glycine 192, and 212–213 (GD) each bind sn-glycerol 1-phosphate.

Belongs to the GGGP/HepGP synthase family. Group I subfamily. Mg(2+) is required as a cofactor.

The protein localises to the cytoplasm. It catalyses the reaction sn-glycerol 1-phosphate + (2E,6E,10E)-geranylgeranyl diphosphate = sn-3-O-(geranylgeranyl)glycerol 1-phosphate + diphosphate. Its pathway is membrane lipid metabolism; glycerophospholipid metabolism. Functionally, prenyltransferase that catalyzes the transfer of the geranylgeranyl moiety of geranylgeranyl diphosphate (GGPP) to the C3 hydroxyl of sn-glycerol-1-phosphate (G1P). This reaction is the first ether-bond-formation step in the biosynthesis of archaeal membrane lipids. This Haloquadratum walsbyi (strain DSM 16790 / HBSQ001) protein is Geranylgeranylglyceryl phosphate synthase.